Consider the following 185-residue polypeptide: Orotate phosphoribosyltransferase (185 aa).

5-phospho-alpha-D-ribose 1-diphosphate-binding positions include Arg-94, Lys-95, Lys-98, His-100, and 120–128 (EDVTTTGGS). Positions 124 and 152 each coordinate orotate.

This sequence belongs to the purine/pyrimidine phosphoribosyltransferase family. PyrE subfamily. In terms of assembly, homodimer. Requires Mg(2+) as cofactor.

The catalysed reaction is orotidine 5'-phosphate + diphosphate = orotate + 5-phospho-alpha-D-ribose 1-diphosphate. It functions in the pathway pyrimidine metabolism; UMP biosynthesis via de novo pathway; UMP from orotate: step 1/2. Catalyzes the transfer of a ribosyl phosphate group from 5-phosphoribose 1-diphosphate to orotate, leading to the formation of orotidine monophosphate (OMP). The sequence is that of Orotate phosphoribosyltransferase from Thermococcus kodakarensis (strain ATCC BAA-918 / JCM 12380 / KOD1) (Pyrococcus kodakaraensis (strain KOD1)).